We begin with the raw amino-acid sequence, 503 residues long: Cysteine--tRNA ligase (503 aa).

Cysteine 31 serves as a coordination point for Zn(2+). Residues 33–43 (PTVYDYAHIGN) carry the 'HIGH' region motif. Zn(2+)-binding residues include cysteine 225, histidine 264, and glutamate 268. The short motif at 297 to 301 (KMSKS) is the 'KMSKS' region element. Lysine 300 is an ATP binding site.

It belongs to the class-I aminoacyl-tRNA synthetase family. As to quaternary structure, monomer. The cofactor is Zn(2+).

The protein resides in the cytoplasm. It catalyses the reaction tRNA(Cys) + L-cysteine + ATP = L-cysteinyl-tRNA(Cys) + AMP + diphosphate. In Bartonella tribocorum (strain CIP 105476 / IBS 506), this protein is Cysteine--tRNA ligase.